Reading from the N-terminus, the 426-residue chain is 3-phosphoshikimate 1-carboxyvinyltransferase (426 aa).

Positions 22, 23, and 27 each coordinate 3-phosphoshikimate. Lys22 contributes to the phosphoenolpyruvate binding site. Gly96 and Arg124 together coordinate phosphoenolpyruvate. Residues Ser170 and Ser171 each contribute to the 3-phosphoshikimate site. Residue Gln172 participates in phosphoenolpyruvate binding. Positions 198, 314, 337, and 341 each coordinate 3-phosphoshikimate. Residue Asp314 is the Proton acceptor of the active site. Phosphoenolpyruvate-binding residues include Arg345, Arg387, and Lys412.

The protein belongs to the EPSP synthase family. Homotetramer.

It localises to the cytoplasm. The enzyme catalyses 3-phosphoshikimate + phosphoenolpyruvate = 5-O-(1-carboxyvinyl)-3-phosphoshikimate + phosphate. Its pathway is metabolic intermediate biosynthesis; chorismate biosynthesis; chorismate from D-erythrose 4-phosphate and phosphoenolpyruvate: step 6/7. Its function is as follows. Catalyzes the transfer of the enolpyruvyl moiety of phosphoenolpyruvate (PEP) to the 5-hydroxyl of shikimate-3-phosphate (S3P) to produce enolpyruvyl shikimate-3-phosphate and inorganic phosphate. The sequence is that of 3-phosphoshikimate 1-carboxyvinyltransferase from Vibrio cholerae serotype O1 (strain ATCC 39315 / El Tor Inaba N16961).